The sequence spans 194 residues: PBAN-type neuropeptides (194 aa).

A signal peptide spans 1-23; it reads MFNQTQLFVFLAVFTTSSVLGNN. Leu-47 is subject to Leucine amide. A propeptide spanning residues 51 to 94 is cleaved from the precursor; sequence SLRISTEDNRQAFFKLLEAADALKYYYDQLPYEMQADEPETRVT. Leu-103, Leu-123, Leu-159, and Leu-169 each carry leucine amide. A propeptide spanning residues 172–194 is cleaved from the precursor; that stretch reads ELSYDMMPNKIRVVRSTNKTRST.

It belongs to the pyrokinin family. In terms of tissue distribution, expressed in the subesophageal ganglions. Not found in corpora cardiaca, corpora allata and thoracic ganglia.

The protein resides in the secreted. A hormone that controls sex pheromone production in females and pheromone responsiveness in male. Also mediates visceral muscle contractile activity (myotropic activity). This Helicoverpa zea (Corn earworm moth) protein is PBAN-type neuropeptides.